We begin with the raw amino-acid sequence, 89 residues long: Large ribosomal subunit protein bL27 (89 aa).

The interval 1 to 21 is disordered; that stretch reads MAHKKAGGSSRNGRDSAGRRL.

It belongs to the bacterial ribosomal protein bL27 family.

This is Large ribosomal subunit protein bL27 from Novosphingobium aromaticivorans (strain ATCC 700278 / DSM 12444 / CCUG 56034 / CIP 105152 / NBRC 16084 / F199).